The chain runs to 163 residues: Phosphopantetheine adenylyltransferase (163 aa).

Threonine 9 lines the substrate pocket. Residues 9-10 (TF) and histidine 17 each bind ATP. Substrate-binding residues include lysine 41, threonine 73, and arginine 87. Residues 88–90 (GLR), glutamate 98, and 123–129 (FSFISSS) contribute to the ATP site.

The protein belongs to the bacterial CoaD family. Homohexamer. It depends on Mg(2+) as a cofactor.

It is found in the cytoplasm. It carries out the reaction (R)-4'-phosphopantetheine + ATP + H(+) = 3'-dephospho-CoA + diphosphate. It participates in cofactor biosynthesis; coenzyme A biosynthesis; CoA from (R)-pantothenate: step 4/5. In terms of biological role, reversibly transfers an adenylyl group from ATP to 4'-phosphopantetheine, yielding dephospho-CoA (dPCoA) and pyrophosphate. This Desulfitobacterium hafniense (strain Y51) protein is Phosphopantetheine adenylyltransferase.